Consider the following 261-residue polypeptide: Small ribosomal subunit protein eS1 (261 aa).

Positions 1 to 18 (MAVGKNKRISKGKKGGKK) are enriched in basic residues. The tract at residues 1–23 (MAVGKNKRISKGKKGGKKKAADP) is disordered.

It belongs to the eukaryotic ribosomal protein eS1 family. Component of the small ribosomal subunit. Mature ribosomes consist of a small (40S) and a large (60S) subunit. The 40S subunit contains about 33 different proteins and 1 molecule of RNA (18S). The 60S subunit contains about 49 different proteins and 3 molecules of RNA (25S, 5.8S and 5S).

The protein resides in the cytoplasm. The polypeptide is Small ribosomal subunit protein eS1 (cyc07) (Nicotiana tabacum (Common tobacco)).